Here is an 87-residue protein sequence, read N- to C-terminus: Small ribosomal subunit protein bS18 (87 aa).

Basic residues predominate over residues 1–19; that stretch reads MSTRSRARKRSRVRSRTRR. Residues 1–25 form a disordered region; that stretch reads MSTRSRARKRSRVRSRTRRKDPIFV.

Belongs to the bacterial ribosomal protein bS18 family. As to quaternary structure, part of the 30S ribosomal subunit. Forms a tight heterodimer with protein bS6.

Binds as a heterodimer with protein bS6 to the central domain of the 16S rRNA, where it helps stabilize the platform of the 30S subunit. This Rhodopirellula baltica (strain DSM 10527 / NCIMB 13988 / SH1) protein is Small ribosomal subunit protein bS18.